The following is a 463-amino-acid chain: Thiamine-repressible acid phosphatase pho4 (463 aa).

The N-terminal stretch at 1–18 (MKLSGISLWLLAASIVHA) is a signal peptide. The active-site Nucleophile is His69. Asn98, Asn104, Asn186, Asn221, Asn251, and Asn328 each carry an N-linked (GlcNAc...) asparagine glycan. Residue Asp341 is the Proton donor of the active site. 3 N-linked (GlcNAc...) asparagine glycosylation sites follow: Asn433, Asn439, and Asn458.

It belongs to the histidine acid phosphatase family.

Its subcellular location is the secreted. The protein resides in the cell wall. The catalysed reaction is a phosphate monoester + H2O = an alcohol + phosphate. Its function is as follows. May dephosphorylate thiamine phosphates. This Schizosaccharomyces pombe (strain 972 / ATCC 24843) (Fission yeast) protein is Thiamine-repressible acid phosphatase pho4 (pho4).